The primary structure comprises 328 residues: Pyruvate dehydrogenase E1 component subunit beta (328 aa).

Glu60 provides a ligand contact to thiamine diphosphate. K(+) contacts are provided by Ile113, Ile162, and Asn166.

As to quaternary structure, heterodimer of an alpha and a beta chain. The cofactor is thiamine diphosphate.

It localises to the plastid. Its subcellular location is the chloroplast. It catalyses the reaction N(6)-[(R)-lipoyl]-L-lysyl-[protein] + pyruvate + H(+) = N(6)-[(R)-S(8)-acetyldihydrolipoyl]-L-lysyl-[protein] + CO2. Functionally, the pyruvate dehydrogenase complex catalyzes the overall conversion of pyruvate to acetyl-CoA and CO(2). It contains multiple copies of three enzymatic components: pyruvate dehydrogenase (E1), dihydrolipoamide acetyltransferase (E2) and lipoamide dehydrogenase (E3). The polypeptide is Pyruvate dehydrogenase E1 component subunit beta (pdhB) (Staurastrum punctulatum (Green alga)).